A 518-amino-acid polypeptide reads, in one-letter code: Lycopene epsilon cyclase, chloroplastic (518 aa).

Residue 100 to 128 (LIVIGCGPAGMSLAAEAGKRGLSVGLIGP) participates in NAD(+) binding. A run of 2 helical transmembrane segments spans residues 435–455 (FFLFGLALILQLDIDGIRIFF) and 469–489 (FLGSTLSSAGLIWFAFYMFAI).

Belongs to the lycopene cyclase family. In terms of tissue distribution, expressed in leaves and roots. Detected in flower buds and lips.

The protein resides in the plastid. It is found in the chloroplast membrane. The enzyme catalyses a carotenoid psi-end group = a carotenoid epsilon-end group. It functions in the pathway carotenoid biosynthesis; alpha-zeacarotene biosynthesis. It participates in carotenoid biosynthesis; delta-carotene biosynthesis. Functionally, catalyzes the single epsilon-cyclization reaction which converts lycopene to delta-carotene and neurosporene to alpha-zeacarotene. Required for lutein biosynthesis. This chain is Lycopene epsilon cyclase, chloroplastic, found in Oncidium hybrid cultivar (Orchid).